Here is a 337-residue protein sequence, read N- to C-terminus: tRNA N6-adenosine threonylcarbamoyltransferase (337 aa).

Fe cation is bound by residues H111 and H115. Substrate contacts are provided by residues 134–138 (LVSGG), D167, G180, and N272. Residue D300 coordinates Fe cation.

Belongs to the KAE1 / TsaD family. Fe(2+) serves as cofactor.

It localises to the cytoplasm. The catalysed reaction is L-threonylcarbamoyladenylate + adenosine(37) in tRNA = N(6)-L-threonylcarbamoyladenosine(37) in tRNA + AMP + H(+). Its function is as follows. Required for the formation of a threonylcarbamoyl group on adenosine at position 37 (t(6)A37) in tRNAs that read codons beginning with adenine. Is involved in the transfer of the threonylcarbamoyl moiety of threonylcarbamoyl-AMP (TC-AMP) to the N6 group of A37, together with TsaE and TsaB. TsaD likely plays a direct catalytic role in this reaction. This Escherichia coli (strain SMS-3-5 / SECEC) protein is tRNA N6-adenosine threonylcarbamoyltransferase.